The following is a 320-amino-acid chain: Porphobilinogen deaminase (320 aa).

Cys241 is modified (S-(dipyrrolylmethanemethyl)cysteine).

It belongs to the HMBS family. Monomer. Dipyrromethane is required as a cofactor.

It catalyses the reaction 4 porphobilinogen + H2O = hydroxymethylbilane + 4 NH4(+). The protein operates within porphyrin-containing compound metabolism; protoporphyrin-IX biosynthesis; coproporphyrinogen-III from 5-aminolevulinate: step 2/4. In terms of biological role, tetrapolymerization of the monopyrrole PBG into the hydroxymethylbilane pre-uroporphyrinogen in several discrete steps. The protein is Porphobilinogen deaminase of Thermobifida fusca (strain YX).